The following is a 667-amino-acid chain: Acyl-coenzyme A oxidase acox-3 (667 aa).

FAD contacts are provided by residues 138–141, 146–147, Gly178, Arg313, 334–337, and Gly410; these read FCLT, GS, and QQYR. The Proton acceptor role is filled by Glu433. FAD is bound at residue Glu435. The Microbody targeting signal motif lies at 665-667; sequence SKL.

It belongs to the acyl-CoA oxidase family. In terms of assembly, homodimer. Requires FAD as cofactor. Expressed in intestine.

The protein resides in the peroxisome. The catalysed reaction is IC-asc-C7-CoA + O2 = IC-asc-DeltaC7-CoA + H2O2. It catalyses the reaction IC-asc-C9-CoA + O2 = IC-asc-DeltaC9-CoA + H2O2. It carries out the reaction asc-C13-CoA + O2 = asc-DeltaC13-CoA + H2O2. Its pathway is lipid metabolism; peroxisomal fatty acid beta-oxidation. Its activity is regulated as follows. In contrast to other acyl-coenzyme A oxidases which bind to and are activated by ATP, does not bind ATP. Functionally, involved in the first step of peroxisomal beta-oxidation by catalyzing the desaturation of fatty acid-derived side chains of ascaroside pheromones, which regulates development and behavior. Specifically, shortens indol-3-carbonyl(IC)-ascarosides with 7-carbon (IC-asc-C7) or 9-carbon (IC-asc-C9) side chains and contributes to the shortening of ascarosides with 13-carbon (asc-C13) and 15-carbon (asc-C15) side chains. In Caenorhabditis elegans, this protein is Acyl-coenzyme A oxidase acox-3.